The sequence spans 935 residues: Inter-alpha-trypsin inhibitor heavy chain H2 (935 aa).

The first 18 residues, 1 to 18 (MKGLTCFLLCFLLSEAQG), serve as a signal peptide directing secretion. The propeptide occupies 19–53 (FEIPTNGLSEFAEYGDLAELALGKFHVVPGNRRSQ). Residues 45-174 (VVPGNRRSQE…KVQFELHYQE (130 aa)) form the VIT domain. Asn107 carries N-linked (GlcNAc...) asparagine glycosylation. A 4-carboxyglutamate modification is found at Glu271. A VWFA domain is found at 297–457 (PKNILFVIDV…YDFLKRLSND (161 aa)). The N-linked (GlcNAc...) asparagine glycan is linked to Asn434. At Ser455 the chain carries Phosphoserine. Asp691 carries the post-translational modification Aspartate 1-(chondroitin 4-sulfate)-ester. A propeptide spanning residues 692 to 935 (PHFIIYLPRS…PLLYSFLKRP (244 aa)) is cleaved from the precursor. Ser875 carries the phosphoserine modification.

Belongs to the ITIH family. In terms of assembly, I-alpha-I plasma protease inhibitors are assembled from one or two heavy chains (HC) and one light chain, bikunin. Inter-alpha-inhibitor (I-alpha-I) is composed of ITIH1/HC1, ITIH2/HC2 and bikunin. Heavy chains are linked to bikunin via chondroitin 4-sulfate esterified to the alpha-carboxyl of the C-terminal aspartate after propeptide cleavage. Post-translationally, phosphorylated by FAM20C in the extracellular medium.

The protein resides in the secreted. Functionally, may act as a carrier of hyaluronan in serum or as a binding protein between hyaluronan and other matrix protein, including those on cell surfaces in tissues to regulate the localization, synthesis and degradation of hyaluronan which are essential to cells undergoing biological processes. The chain is Inter-alpha-trypsin inhibitor heavy chain H2 (ITIH2) from Sus scrofa (Pig).